A 317-amino-acid chain; its full sequence is Malate dehydrogenase (317 aa).

Residues 10–15 (GGGQIG) and Asp34 each bind NAD(+). Residues Arg83 and Arg89 each coordinate substrate. Residues Asn96 and 119-121 (ISN) contribute to the NAD(+) site. Asn121 and Arg152 together coordinate substrate. The Proton acceptor role is filled by His176.

The protein belongs to the LDH/MDH superfamily. MDH type 3 family.

The enzyme catalyses (S)-malate + NAD(+) = oxaloacetate + NADH + H(+). Functionally, catalyzes the reversible oxidation of malate to oxaloacetate. This is Malate dehydrogenase from Geobacter metallireducens (strain ATCC 53774 / DSM 7210 / GS-15).